A 106-amino-acid chain; its full sequence is Nucleoid-associated protein Exig_0019 (106 aa).

Low complexity predominate over residues 1 to 16 (MRGMGNMNNMMKQMQK). Residues 1–23 (MRGMGNMNNMMKQMQKMQKDMAK) form a disordered region.

It belongs to the YbaB/EbfC family. As to quaternary structure, homodimer.

The protein resides in the cytoplasm. It is found in the nucleoid. In terms of biological role, binds to DNA and alters its conformation. May be involved in regulation of gene expression, nucleoid organization and DNA protection. The sequence is that of Nucleoid-associated protein Exig_0019 from Exiguobacterium sibiricum (strain DSM 17290 / CCUG 55495 / CIP 109462 / JCM 13490 / 255-15).